The chain runs to 310 residues: Homoserine O-acetyltransferase (310 aa).

Cysteine 142 serves as the catalytic Acyl-thioester intermediate. Substrate contacts are provided by lysine 163 and serine 192. Residue histidine 235 is the Proton acceptor of the active site. Residue glutamate 237 is part of the active site. Arginine 249 contributes to the substrate binding site.

Belongs to the MetA family.

Its subcellular location is the cytoplasm. The enzyme catalyses L-homoserine + acetyl-CoA = O-acetyl-L-homoserine + CoA. Its pathway is amino-acid biosynthesis; L-methionine biosynthesis via de novo pathway; O-acetyl-L-homoserine from L-homoserine: step 1/1. Its function is as follows. Transfers an acetyl group from acetyl-CoA to L-homoserine, forming acetyl-L-homoserine. This is Homoserine O-acetyltransferase from Agathobacter rectalis (strain ATCC 33656 / DSM 3377 / JCM 17463 / KCTC 5835 / VPI 0990) (Eubacterium rectale).